The sequence spans 62 residues: UPF0337 protein XCC0070 (62 aa).

Positions 32 to 62 are disordered; the sequence is LEGAAEKNIGKVQRKAGELADDVRDATKSTR.

The protein belongs to the UPF0337 (CsbD) family.

The sequence is that of UPF0337 protein XCC0070 from Xanthomonas campestris pv. campestris (strain ATCC 33913 / DSM 3586 / NCPPB 528 / LMG 568 / P 25).